We begin with the raw amino-acid sequence, 315 residues long: Putative HTH-type transcriptional regulatory protein PF1851 (315 aa).

The HTH cro/C1-type domain occupies 131–189 (LRELREKYGYSTTELAEMLGVSRKSVQRYEKGEGMVSIDVAIRLEEIFDEPLVKPIDIF). Positions 142–161 (TTELAEMLGVSRKSVQRYEK) form a DNA-binding region, H-T-H motif.

The protein is Putative HTH-type transcriptional regulatory protein PF1851 of Pyrococcus furiosus (strain ATCC 43587 / DSM 3638 / JCM 8422 / Vc1).